A 295-amino-acid polypeptide reads, in one-letter code: UDP-3-O-acyl-N-acetylglucosamine deacetylase (295 aa).

Zn(2+) contacts are provided by His-75, His-232, and Asp-236. The active-site Proton donor is His-259.

It belongs to the LpxC family. It depends on Zn(2+) as a cofactor.

The enzyme catalyses a UDP-3-O-[(3R)-3-hydroxyacyl]-N-acetyl-alpha-D-glucosamine + H2O = a UDP-3-O-[(3R)-3-hydroxyacyl]-alpha-D-glucosamine + acetate. Its pathway is glycolipid biosynthesis; lipid IV(A) biosynthesis; lipid IV(A) from (3R)-3-hydroxytetradecanoyl-[acyl-carrier-protein] and UDP-N-acetyl-alpha-D-glucosamine: step 2/6. Catalyzes the hydrolysis of UDP-3-O-myristoyl-N-acetylglucosamine to form UDP-3-O-myristoylglucosamine and acetate, the committed step in lipid A biosynthesis. The polypeptide is UDP-3-O-acyl-N-acetylglucosamine deacetylase (Helicobacter pylori (strain J99 / ATCC 700824) (Campylobacter pylori J99)).